Consider the following 130-residue polypeptide: Small ribosomal subunit protein uS9 (130 aa).

This sequence belongs to the universal ribosomal protein uS9 family.

This chain is Small ribosomal subunit protein uS9 (rpsI), found in Geobacillus stearothermophilus (Bacillus stearothermophilus).